The following is a 207-amino-acid chain: Ribosome maturation factor RimP (207 aa).

It belongs to the RimP family.

Its subcellular location is the cytoplasm. Its function is as follows. Required for maturation of 30S ribosomal subunits. This Parvibaculum lavamentivorans (strain DS-1 / DSM 13023 / NCIMB 13966) protein is Ribosome maturation factor RimP.